We begin with the raw amino-acid sequence, 230 residues long: Endonuclease NucS (230 aa).

Belongs to the NucS endonuclease family.

Its subcellular location is the cytoplasm. Its function is as follows. Cleaves both 3' and 5' ssDNA extremities of branched DNA structures. This chain is Endonuclease NucS, found in Corynebacterium aurimucosum (strain ATCC 700975 / DSM 44827 / CIP 107346 / CN-1) (Corynebacterium nigricans).